The sequence spans 309 residues: Thermolabile glutaminase (309 aa).

Positions 64, 114, 160, 167, 191, 243, and 261 each coordinate substrate.

This sequence belongs to the glutaminase family. As to quaternary structure, homotetramer.

It carries out the reaction L-glutamine + H2O = L-glutamate + NH4(+). The sequence is that of Thermolabile glutaminase (glsA) from Rhizobium etli (strain ATCC 51251 / DSM 11541 / JCM 21823 / NBRC 15573 / CFN 42).